Consider the following 133-residue polypeptide: Small ribosomal subunit protein uS8 (133 aa).

It belongs to the universal ribosomal protein uS8 family. As to quaternary structure, part of the 30S ribosomal subunit. Contacts proteins S5 and S12.

Its function is as follows. One of the primary rRNA binding proteins, it binds directly to 16S rRNA central domain where it helps coordinate assembly of the platform of the 30S subunit. The sequence is that of Small ribosomal subunit protein uS8 from Cyanothece sp. (strain PCC 7425 / ATCC 29141).